Consider the following 85-residue polypeptide: Putative transmembrane protein ORF28 (85 aa).

A run of 2 helical transmembrane segments spans residues Ile32 to Val52 and Leu59 to Ile79.

It is found in the host membrane. The chain is Putative transmembrane protein ORF28 from Haloarcula hispanica (His1V).